A 448-amino-acid chain; its full sequence is Exodeoxyribonuclease 7 large subunit (448 aa).

It belongs to the XseA family. Heterooligomer composed of large and small subunits.

The protein localises to the cytoplasm. The enzyme catalyses Exonucleolytic cleavage in either 5'- to 3'- or 3'- to 5'-direction to yield nucleoside 5'-phosphates.. Functionally, bidirectionally degrades single-stranded DNA into large acid-insoluble oligonucleotides, which are then degraded further into small acid-soluble oligonucleotides. This is Exodeoxyribonuclease 7 large subunit from Nitrosomonas europaea (strain ATCC 19718 / CIP 103999 / KCTC 2705 / NBRC 14298).